Reading from the N-terminus, the 427-residue chain is Histidine--tRNA ligase (427 aa).

It belongs to the class-II aminoacyl-tRNA synthetase family. In terms of assembly, homodimer.

It localises to the cytoplasm. It carries out the reaction tRNA(His) + L-histidine + ATP = L-histidyl-tRNA(His) + AMP + diphosphate + H(+). The polypeptide is Histidine--tRNA ligase (hisS) (Mycobacterium leprae (strain TN)).